Reading from the N-terminus, the 518-residue chain is Glutamate--cysteine ligase (518 aa).

It belongs to the glutamate--cysteine ligase type 1 family. Type 1 subfamily.

It carries out the reaction L-cysteine + L-glutamate + ATP = gamma-L-glutamyl-L-cysteine + ADP + phosphate + H(+). It functions in the pathway sulfur metabolism; glutathione biosynthesis; glutathione from L-cysteine and L-glutamate: step 1/2. The polypeptide is Glutamate--cysteine ligase (Salmonella typhi).